Reading from the N-terminus, the 158-residue chain is Ribosome maturation factor RimP (158 aa).

It belongs to the RimP family.

It localises to the cytoplasm. Functionally, required for maturation of 30S ribosomal subunits. The chain is Ribosome maturation factor RimP from Streptococcus uberis (strain ATCC BAA-854 / 0140J).